The primary structure comprises 645 residues: Glucans biosynthesis glucosyltransferase H (645 aa).

The tract at residues 1–28 (MDGTVTLSPAPTDLPPVSSLDAGQPTLP) is disordered. 7 helical membrane-spanning segments follow: residues 64–84 (LIGG…SVLW), 98–118 (LFVL…AGFI), 423–443 (APMW…GAGI), 465–485 (AIWI…LGYI), 504–524 (ALSI…VMYL), 558–578 (SYGG…LVSP), and 580–600 (LAAW…VVAV).

Belongs to the glycosyltransferase 2 family. OpgH subfamily.

It localises to the cell inner membrane. It functions in the pathway glycan metabolism; osmoregulated periplasmic glucan (OPG) biosynthesis. In terms of biological role, involved in the biosynthesis of osmoregulated periplasmic glucans (OPGs). The chain is Glucans biosynthesis glucosyltransferase H from Xanthomonas campestris pv. campestris (strain 8004).